The following is a 175-amino-acid chain: Peptide deformylase (175 aa).

Fe cation is bound by residues Cys-98 and His-140. The active site involves Glu-141. Residue His-144 coordinates Fe cation.

The protein belongs to the polypeptide deformylase family. Fe(2+) serves as cofactor.

It carries out the reaction N-terminal N-formyl-L-methionyl-[peptide] + H2O = N-terminal L-methionyl-[peptide] + formate. Removes the formyl group from the N-terminal Met of newly synthesized proteins. Requires at least a dipeptide for an efficient rate of reaction. N-terminal L-methionine is a prerequisite for activity but the enzyme has broad specificity at other positions. This is Peptide deformylase from Bradyrhizobium sp. (strain ORS 278).